We begin with the raw amino-acid sequence, 436 residues long: Methylenetetrahydrofolate--tRNA-(uracil-5-)-methyltransferase TrmFO (436 aa).

Residue 7–12 (GAGLAG) coordinates FAD.

Belongs to the MnmG family. TrmFO subfamily. It depends on FAD as a cofactor.

The protein resides in the cytoplasm. It carries out the reaction uridine(54) in tRNA + (6R)-5,10-methylene-5,6,7,8-tetrahydrofolate + NADH + H(+) = 5-methyluridine(54) in tRNA + (6S)-5,6,7,8-tetrahydrofolate + NAD(+). The catalysed reaction is uridine(54) in tRNA + (6R)-5,10-methylene-5,6,7,8-tetrahydrofolate + NADPH + H(+) = 5-methyluridine(54) in tRNA + (6S)-5,6,7,8-tetrahydrofolate + NADP(+). In terms of biological role, catalyzes the folate-dependent formation of 5-methyl-uridine at position 54 (M-5-U54) in all tRNAs. This chain is Methylenetetrahydrofolate--tRNA-(uracil-5-)-methyltransferase TrmFO, found in Caldicellulosiruptor bescii (strain ATCC BAA-1888 / DSM 6725 / KCTC 15123 / Z-1320) (Anaerocellum thermophilum).